A 375-amino-acid polypeptide reads, in one-letter code: Alcohol dehydrogenase 1 (375 aa).

The residue at position 2 (S2) is an N-acetylserine. Zn(2+) contacts are provided by C47, H68, C98, C101, C104, C112, and C175. NAD(+) contacts are provided by residues 200–205 (WSGRVG), D224, and K229. K234 bears the N6-succinyllysine mark. NAD(+) is bound at residue 293-295 (VGV). K340 is subject to N6-succinyllysine. Residue R370 participates in NAD(+) binding.

This sequence belongs to the zinc-containing alcohol dehydrogenase family. Class-I subfamily. In terms of assembly, homodimer. Zn(2+) serves as cofactor.

The protein localises to the cytoplasm. It catalyses the reaction a primary alcohol + NAD(+) = an aldehyde + NADH + H(+). It carries out the reaction a secondary alcohol + NAD(+) = a ketone + NADH + H(+). This chain is Alcohol dehydrogenase 1 (ADH1), found in Geomys knoxjonesi (Jones' pocket gopher).